A 307-amino-acid polypeptide reads, in one-letter code: Transcription initiation factor IIF subunit beta (307 aa).

Positions 1–12 are enriched in basic and acidic residues; the sequence is MSEEKPTVRTEE. Disordered regions lie at residues 1-22 and 261-307; these read MSEEKPTVRTEEDDRYEDDAGD and VELR…IDVV. The segment covering 13-22 has biased composition (acidic residues); sequence DDRYEDDAGD. Positions 263–290 are enriched in polar residues; it reads LRNQQASQSESSSIDHTGKNTSPDNPGT. A compositionally biased stretch (acidic residues) spans 292–307; sequence AEEDEDDDGVEMIDVV.

This sequence belongs to the TFIIF beta subunit family. In terms of assembly, component of the fcp1/TFIIF/polII complex via interaction of tfg3 with both tfg1/TFIIF-alpha and tfg2/TFIIF-beta subunits.

The protein localises to the nucleus. In terms of biological role, TFIIF is a general transcription initiation factor that binds to RNA polymerase II and helps to recruit it to the initiation complex in collaboration with TFIIB. It promotes transcription elongation. This is Transcription initiation factor IIF subunit beta (tfg2) from Schizosaccharomyces pombe (strain 972 / ATCC 24843) (Fission yeast).